The chain runs to 193 residues: Pyridoxal 5'-phosphate synthase subunit PdxT (193 aa).

48-50 is an L-glutamine binding site; it reads GES. Residue cysteine 80 is the Nucleophile of the active site. Residues arginine 109 and 137 to 138 contribute to the L-glutamine site; that span reads IR. Residues histidine 173 and glutamate 175 each act as charge relay system in the active site.

Belongs to the glutaminase PdxT/SNO family. As to quaternary structure, in the presence of PdxS, forms a dodecamer of heterodimers. Only shows activity in the heterodimer.

It carries out the reaction aldehydo-D-ribose 5-phosphate + D-glyceraldehyde 3-phosphate + L-glutamine = pyridoxal 5'-phosphate + L-glutamate + phosphate + 3 H2O + H(+). The enzyme catalyses L-glutamine + H2O = L-glutamate + NH4(+). The protein operates within cofactor biosynthesis; pyridoxal 5'-phosphate biosynthesis. Its function is as follows. Catalyzes the hydrolysis of glutamine to glutamate and ammonia as part of the biosynthesis of pyridoxal 5'-phosphate. The resulting ammonia molecule is channeled to the active site of PdxS. The protein is Pyridoxal 5'-phosphate synthase subunit PdxT of Mycobacteroides abscessus (strain ATCC 19977 / DSM 44196 / CCUG 20993 / CIP 104536 / JCM 13569 / NCTC 13031 / TMC 1543 / L948) (Mycobacterium abscessus).